The chain runs to 337 residues: MANSC domain-containing protein 4 (337 aa).

An N-terminal signal peptide occupies residues 1–18 (MRAVELLLLLGLASMVHG). Topologically, residues 19 to 278 (LCSPTVFYRD…SSENEEPWDG (260 aa)) are extracellular. The 81-residue stretch at 33 to 113 (RFPGMLLDLE…LEPGASAILY (81 aa)) folds into the MANSC domain. Residues Asn114, Asn227, and Asn251 are each glycosylated (N-linked (GlcNAc...) asparagine). Composition is skewed to polar residues over residues 216 to 230 (SPSTDFTHSPGNKTI) and 239 to 260 (TRVSQVPSRSRLNISKPSVNKT). Positions 216–277 (SPSTDFTHSP…HSSENEEPWD (62 aa)) are disordered. Residues 279–299 (APASAGVWLACVTLGAAVISL) traverse the membrane as a helical segment. The Cytoplasmic segment spans residues 300–337 (CCRVVLGTSRCCGKRQGWSHMGQRSASGCRRNTLKENS). The disordered stretch occupies residues 314-337 (RQGWSHMGQRSASGCRRNTLKENS).

It is found in the membrane. This is MANSC domain-containing protein 4 (Mansc4) from Mus musculus (Mouse).